The following is a 118-amino-acid chain: Putative pterin-4-alpha-carbinolamine dehydratase (118 aa).

The protein belongs to the pterin-4-alpha-carbinolamine dehydratase family.

It catalyses the reaction (4aS,6R)-4a-hydroxy-L-erythro-5,6,7,8-tetrahydrobiopterin = (6R)-L-erythro-6,7-dihydrobiopterin + H2O. This chain is Putative pterin-4-alpha-carbinolamine dehydratase, found in Pseudomonas paraeruginosa (strain DSM 24068 / PA7) (Pseudomonas aeruginosa (strain PA7)).